The sequence spans 309 residues: Porphobilinogen deaminase (309 aa).

An S-(dipyrrolylmethanemethyl)cysteine modification is found at cysteine 241.

The protein belongs to the HMBS family. In terms of assembly, monomer. Requires dipyrromethane as cofactor.

It catalyses the reaction 4 porphobilinogen + H2O = hydroxymethylbilane + 4 NH4(+). It participates in porphyrin-containing compound metabolism; protoporphyrin-IX biosynthesis; coproporphyrinogen-III from 5-aminolevulinate: step 2/4. In terms of biological role, tetrapolymerization of the monopyrrole PBG into the hydroxymethylbilane pre-uroporphyrinogen in several discrete steps. The protein is Porphobilinogen deaminase of Bacillus cereus (strain AH187).